A 553-amino-acid chain; its full sequence is MAGINRAGPSGAYFVGHTDPEPVSGQAHGSGSGASSSNSPQVQPRPSNTPPSNAPAPPPTGRERLSRSTALSRQTREWLEQGMPTAEDASVRRRPQVTADAATPRAEARRTPEATADASAPRRGAVAHANSIVQQLVSEGADISHTRNMLRNAMNGDAVAFSRVEQNIFRQHFPNMPMHGISRDSELAIELRGALRRAVHQQAASAPVRSPTPTPASPAASSSGSSQRSLFGRFARLMAPNQGRSSNTAASQTPVDRSPPRVNQRPIRVDRAAMRNRGNDEADAALRGLVQQGVNLEHLRTALERHVMQRLPIPLDIGSALQNVGINPSIDLGESLVQHPLLNLNVALNRMLGLRPSAERAPRPAVPVAPATASRRPDGTRATRLRVMPEREDYENNVAYGVRLLNLNPGVGVRQAVAAFVTDRAERPAVVANIRAALDPIASQFSQLRTISKADAESEELGFKDAADHHTDDVTHCLFGGELSLSNPDQQVIGLAGNPTDTSQPYSQEGNKDLAFMDMKKLAQFLAGKPEHPMTRETLNAENIAKYAFRIVP.

3 disordered regions span residues 1 to 123, 198 to 227, and 239 to 275; these read MAGI…APRR, AVHQ…GSSQ, and APNQ…AAMR. Positions 1 to 308 are host recognition; Pto interaction; it reads MAGINRAGPS…LRTALERHVM (308 aa). Residues 24–39 are compositionally biased toward low complexity; it reads SGQAHGSGSGASSSNS. Residues 47 to 60 show a composition bias toward pro residues; the sequence is SNTPPSNAPAPPPT. Positions 217-227 are enriched in low complexity; it reads SPAASSSGSSQ. Polar residues predominate over residues 242–255; that stretch reads QGRSSNTAASQTPV. The E3 ubiquitin-protein ligase stretch occupies residues 309 to 553; that stretch reads QRLPIPLDIG…IAKYAFRIVP (245 aa). The short motif at 325–328 is the Interaction with Pto-kinase element; that stretch reads GINP. Residues 361 to 380 form a disordered region; it reads APRPAVPVAPATASRRPDGT. The interval 512-529 is required for E3 ubiquitin-protein ligase and anti-PCD activities and pathogenesis; that stretch reads KDLAFMDMKKLAQFLAGK.

Belongs to the HopAB family. Interacts physically with plant cell Pto. Auto-ubiquitinated.

Its subcellular location is the secreted. Its function is as follows. Effector protein involved in gene-for-gene resistance in tomato plants. It is recognized by the host Pto resistance protein and elicits Pto and Prf-dependent hypersensitive response (HR) and programmed cell death (PCD), resulting in host immunity. In susceptible plants, acts as a virulence factor by suppressing PCD and HR-based plant immunity. This function requires its E3 ubiquitin ligase activity probably by recruiting E2 enzymes and transferring ubiquitin molecules to cellular proteins involved in regulation of PCD and targeting them for degradation. Also, induces expression of host genes involved in ethylene biosynthesis and signaling, in particular ACO1 and ACO2, encoding the ethylene-forming enzyme ACC oxidase. The sequence is that of Effector protein HopAB2 (hopAB2) from Pseudomonas syringae pv. tomato (strain ATCC BAA-871 / DC3000).